The following is a 345-amino-acid chain: Protein-glutamate methylesterase/protein-glutamine glutaminase 2 (345 aa).

Positions 1–116 (MVVDDSAVVR…KQFLVDASDD (116 aa)) constitute a Response regulatory domain. A 4-aspartylphosphate modification is found at aspartate 50. The CheB-type methylesterase domain maps to 154–345 (LQTTERVVAL…AREIMAQMAG (192 aa)). Residues serine 166, histidine 192, and aspartate 288 contribute to the active site.

This sequence belongs to the CheB family. In terms of processing, phosphorylated by CheA. Phosphorylation of the N-terminal regulatory domain activates the methylesterase activity.

It is found in the cytoplasm. It catalyses the reaction [protein]-L-glutamate 5-O-methyl ester + H2O = L-glutamyl-[protein] + methanol + H(+). The enzyme catalyses L-glutaminyl-[protein] + H2O = L-glutamyl-[protein] + NH4(+). In terms of biological role, involved in chemotaxis. Part of a chemotaxis signal transduction system that modulates chemotaxis in response to various stimuli. Catalyzes the demethylation of specific methylglutamate residues introduced into the chemoreceptors (methyl-accepting chemotaxis proteins or MCP) by CheR. Also mediates the irreversible deamidation of specific glutamine residues to glutamic acid. The protein is Protein-glutamate methylesterase/protein-glutamine glutaminase 2 of Albidiferax ferrireducens (strain ATCC BAA-621 / DSM 15236 / T118) (Rhodoferax ferrireducens).